The chain runs to 1258 residues: Ice nucleation protein (1258 aa).

The segment at 162–1217 (ATYGSTLSGT…LTAGENSVLI (1056 aa)) is octapeptide periodicity. Disordered regions lie at residues 260-287 (YGST…KGSD), 311-342 (TQTA…GYGS), 356-383 (YGST…KGSD), 407-438 (TQTA…GYGS), and 452-480 (YGST…GSDL). Composition is skewed to polar residues over residues 261-286 (GSTQ…QKGS), 311-334 (TQTA…QKGS), 357-382 (GSTQ…QKGS), 407-430 (TQTA…QKGS), and 453-480 (GSTQ…GSDL).

It belongs to the bacterial ice nucleation protein family.

The protein localises to the cell outer membrane. Ice nucleation proteins enable bacteria to nucleate crystallization in supercooled water. The protein is Ice nucleation protein (iceE) of Enterobacter agglomerans (Erwinia herbicola).